An 813-amino-acid chain; its full sequence is Hyaluronate lyase HylB (813 aa).

Positions 1 to 32 (MFGTPSRRTFLTASALSAMALAASPTVTDAIA) form a signal peptide, tat-type signal. Active-site residues include Asn-222, His-272, and Tyr-281.

Belongs to the polysaccharide lyase 8 family. Predicted to be exported by the Tat system. The position of the signal peptide cleavage has not been experimentally proven.

It is found in the secreted. The catalysed reaction is [hyaluronan](n) = n 3-(4-deoxy-beta-D-gluc-4-enuronosyl)-N-acetyl-D-glucosamine + H2O. In terms of biological role, degrades hyaluronic acid (HA) exclusively into HA disaccharides (HA-2). Produced HA-2s confer anti-inflammatory properties leading to reduced immunopathology in the mouse model of acne. This is Hyaluronate lyase HylB from Cutibacterium acnes (strain DSM 16379 / KPA171202) (Propionibacterium acnes).